A 451-amino-acid chain; its full sequence is Adenylyltransferase and sulfurtransferase MOCS3-1 (451 aa).

Positions 42 to 62 (GEDSDEAEESSNDMPTPQTKL) are disordered. Residues 43–52 (EDSDEAEESS) are compositionally biased toward acidic residues. At Thr-60 the chain carries Phosphothreonine. ATP contacts are provided by residues Gly-99, Asp-120, 127–131 (SNLHR), Lys-144, and 188–189 (DN). Positions 229 and 232 each coordinate Zn(2+). Catalysis depends on Cys-246, which acts as the Glycyl thioester intermediate; for adenylyltransferase activity. Positions 304 and 307 each coordinate Zn(2+). The 97-residue stretch at 353–449 (QSQPHLLLDV…WTGSVDATFP (97 aa)) folds into the Rhodanese domain. Catalysis depends on Cys-408, which acts as the Cysteine persulfide intermediate; for sulfurtransferase activity.

It in the N-terminal section; belongs to the HesA/MoeB/ThiF family. UBA4 subfamily. Zn(2+) is required as a cofactor.

Its subcellular location is the cytoplasm. The catalysed reaction is [molybdopterin-synthase sulfur-carrier protein]-C-terminal Gly-Gly + ATP + H(+) = [molybdopterin-synthase sulfur-carrier protein]-C-terminal Gly-Gly-AMP + diphosphate. The enzyme catalyses [molybdopterin-synthase sulfur-carrier protein]-C-terminal Gly-Gly-AMP + S-sulfanyl-L-cysteinyl-[cysteine desulfurase] + AH2 = [molybdopterin-synthase sulfur-carrier protein]-C-terminal-Gly-aminoethanethioate + L-cysteinyl-[cysteine desulfurase] + A + AMP + 2 H(+). It functions in the pathway tRNA modification; 5-methoxycarbonylmethyl-2-thiouridine-tRNA biosynthesis. The protein operates within cofactor biosynthesis; molybdopterin biosynthesis. Its function is as follows. Plays a central role in 2-thiolation of mcm(5)S(2)U at tRNA wobble positions of cytosolic tRNA(Lys), tRNA(Glu) and tRNA(Gln). Also essential during biosynthesis of the molybdenum cofactor. Acts by mediating the C-terminal thiocarboxylation of sulfur carriers URM1 and MOCS2A. Its N-terminus first activates URM1 and MOCS2A as acyl-adenylates (-COAMP), then the persulfide sulfur on the catalytic cysteine is transferred to URM1 and MOCS2A to form thiocarboxylation (-COSH) of their C-terminus. The reaction probably involves hydrogen sulfide that is generated from the persulfide intermediate and that acts as a nucleophile towards URM1 and MOCS2A. Subsequently, a transient disulfide bond is formed. Does not use thiosulfate as sulfur donor; NFS1 probably acting as a sulfur donor for thiocarboxylation reactions. The protein is Adenylyltransferase and sulfurtransferase MOCS3-1 of Drosophila pseudoobscura pseudoobscura (Fruit fly).